Consider the following 114-residue polypeptide: Nucleoid-associated protein NT01CX_0824 (114 aa).

It belongs to the YbaB/EbfC family. In terms of assembly, homodimer.

Its subcellular location is the cytoplasm. It is found in the nucleoid. Binds to DNA and alters its conformation. May be involved in regulation of gene expression, nucleoid organization and DNA protection. The sequence is that of Nucleoid-associated protein NT01CX_0824 from Clostridium novyi (strain NT).